Reading from the N-terminus, the 243-residue chain is Terpene cyclase nodB (243 aa).

A run of 3 helical transmembrane segments spans residues 19–39 (ISDI…AGMI), 50–70 (MAPL…LIYP), and 75–95 (IEQG…YTAI). Residue Asn111 is glycosylated (N-linked (GlcNAc...) asparagine). 4 helical membrane-spanning segments follow: residues 112 to 132 (ITLI…ALAA), 134 to 154 (IGPA…LSVG), 169 to 189 (SYTL…FAIL), and 205 to 225 (LVLW…ICLW).

This sequence belongs to the paxB family.

It is found in the membrane. It participates in secondary metabolite biosynthesis. Its function is as follows. Terpene cyclase; part of the gene cluster that mediates the biosynthesis of the indole diterpenes nodulisporic acids (NA). Nodulisporic acid A (NAA) and its chemically modified derivatives are of particular significance because of their highly potent insecticidal activity against blood-feeding arthropods and lack of observable adverse effects on mammals, in particular the tremogenicity associated with the paspaline-derived IDTs is not observed. The geranylgeranyl diphosphate (GGPP) synthase ggs1, localized outside of the cluster, is proposed to catalyze the first step in nodulisporic acid biosynthesis via conversion of farnesyl pyrophosphate and isopentyl pyrophosphate into geranylgeranyl pyrophosphate (GGPP). Condensation of indole-3-glycerol phosphate with GGPP by the prenyl transferase nodC then forms 3-geranylgeranylindole (3-GGI). Epoxidation by the FAD-dependent monooxygenase nodM leads to a single-epoxidized-GGI that is substrate of the terpene cyclase nodB for cyclization to yield emindole SB. The terminal methyl carbon, C28, of emindole SB is then oxidized by the cytochrome P450 monooxygenase nodW to produce nodulisporic acid F (NAF), the pentacyclic core of NAA. NAF is converted to nodulisporic acid E (NAE) via prenylation. This step is probably performed by one of the indole diterpene prenyltransferases nodD1 or nodD2. Several oxidation steps performed by the FAD-linked oxidoreductase nodO and one of the cytochrome P450 monooxygenase nodR, nodX or nodZ further convert NAE to nodulisporic acid D (NAD). NAD is substrate of cytochrome P450 monooxygenase nodJ to produce the precursor of nodulisporic acid C (NAC), converted to NAC by one of the indole diterpene prenyltransferases nodD1 or nodD2. The FAD-dependent monooxygenase nodY2 then oxidizes NAC to nodulisporic acid B (NAB). Finally NAB is converted to NAA by one of the cytochrome P450 monooxygenases nodR, nodX or nodZ. This is Terpene cyclase nodB from Hypoxylon pulicicidum.